The following is a 341-amino-acid chain: UDP-3-O-(3-hydroxymyristoyl)glucosamine N-acyltransferase (341 aa).

The active-site Proton acceptor is the histidine 239.

Belongs to the transferase hexapeptide repeat family. LpxD subfamily. In terms of assembly, homotrimer.

It carries out the reaction a UDP-3-O-[(3R)-3-hydroxyacyl]-alpha-D-glucosamine + a (3R)-hydroxyacyl-[ACP] = a UDP-2-N,3-O-bis[(3R)-3-hydroxyacyl]-alpha-D-glucosamine + holo-[ACP] + H(+). It catalyses the reaction UDP-3-O-[(3R)-3-hydroxytetradecanoyl]-alpha-D-glucosamine + (3R)-hydroxytetradecanoyl-[ACP] = UDP-2-N,3-O-bis[(3R)-3-hydroxytetradecanoyl]-alpha-D-glucosamine + holo-[ACP] + H(+). It participates in glycolipid biosynthesis; lipid IV(A) biosynthesis; lipid IV(A) from (3R)-3-hydroxytetradecanoyl-[acyl-carrier-protein] and UDP-N-acetyl-alpha-D-glucosamine: step 3/6. Functionally, catalyzes the N-acylation of UDP-3-O-(hydroxytetradecanoyl)glucosamine using 3-hydroxytetradecanoyl-ACP as the acyl donor. Is involved in the biosynthesis of lipid A, a phosphorylated glycolipid that anchors the lipopolysaccharide to the outer membrane of the cell. The chain is UDP-3-O-(3-hydroxymyristoyl)glucosamine N-acyltransferase from Shigella dysenteriae serotype 1 (strain Sd197).